Here is a 255-residue protein sequence, read N- to C-terminus: Protein SCO2 homolog, mitochondrial (255 aa).

The transit peptide at methionine 1–arginine 41 directs the protein to the mitochondrion. At glutamine 42 to arginine 49 the chain is on the mitochondrial matrix side. The chain crosses the membrane as a helical span at residues leucine 50 to alanine 67. At arginine 68–proline 255 the chain is on the mitochondrial intermembrane side. One can recognise a Thioredoxin domain in the interval tryptophan 74–alanine 248. The Cu cation site is built by cysteine 122, cysteine 126, and histidine 213. Residues cysteine 122 and cysteine 126 are joined by a disulfide bond.

This sequence belongs to the SCO1/2 family. In terms of assembly, homodimer. Interacts with COA6. Found in a complex with TMEM177, COX20, COA6, MT-CO2/COX2, COX18 and SCO1. Interacts with TMEM177 in a COX20-dependent manner. Interacts with COX20 in a MT-CO2/COX2- and COX18-dependent manner. Interacts with COX16. In terms of tissue distribution, expressed in retina, retinal pigment epithelium, and sclera.

It localises to the mitochondrion inner membrane. Functionally, copper metallochaperone essential for the synthesis and maturation of cytochrome c oxidase subunit II (MT-CO2/COX2) by facilitating the incorporation of copper into the Cu(A) site of MT-CO2/COX2. Could also act as a thiol-disulfide oxidoreductase to regulate the redox state of the cysteines in SCO1 during maturation of MT-CO2/COX2. In Mus musculus (Mouse), this protein is Protein SCO2 homolog, mitochondrial (Sco2).